A 377-amino-acid polypeptide reads, in one-letter code: Stimulator of interferon genes protein (377 aa).

Residues 1 to 21 (MRRAEENNGFGTIPKRRNQHT) lie on the Cytoplasmic side of the membrane. The chain crosses the membrane as a helical span at residues 22 to 42 (PFYASIGMIVVIIVAFTSYHI). The Extracellular segment spans residues 43–57 (TSYGDDRNRAMRQYS). Residues 58 to 80 (FTFSLAYLAFLVGELLRRCCLFA) traverse the membrane as a helical segment. Residues 81 to 101 (EEYRHIETRYNGSLKKAIQTT) are Cytoplasmic-facing. The chain crosses the membrane as a helical span at residues 102–122 (FSFGHNNVLFVASLLFFVVFV). Over 123 to 154 (ASNDPNGSSSVIQGNSTAEPHTEMRQTSGWQG) the chain is Extracellular. A helical transmembrane segment spans residues 155–175 (LWGQFIISALLTPLVVHLLGL). Residues 176-377 (RELSKVEESQ…LKDSELEIGG (202 aa)) lie on the Cytoplasmic side of the membrane. Residues tyrosine 206, arginine 272, 278–279 (RH), and threonine 303 contribute to the 2',3'-cGAMP site. 3',3'-c-di-GMP contacts are provided by residues tyrosine 206, arginine 272, arginine 278, and 300–303 (EYAT).

This sequence belongs to the TMEM173 family. In terms of assembly, homodimer.

It is found in the endoplasmic reticulum membrane. Its function is as follows. Sensor of cytosolic DNA from bacteria and viruses that promotes autophagy. Acts by recognizing and binding cyclic GMP-AMP (cGAMP), a messenger produced by CGAS in response to DNA in the cytosol. Following cGAMP-binding, promotes the formation of autophagosomes, leading to target cytosolic DNA for degradation by the lysosome. Exhibits guanine base-specific ligand recognition. Binds 3'-3'linked cGAMP, 2'-3' linked cGAMP and 3'-3' linked c-di-GMP with much greater affinity as compared to 3'-3' linked c-di-AMP. Lacks the C-terminal tail (CTT) found in mammalian orthologs which is essential for interferon signaling. The sequence is that of Stimulator of interferon genes protein from Nematostella vectensis (Starlet sea anemone).